The following is a 445-amino-acid chain: Sensor protein kinase CarS (445 aa).

A signal peptide spans 1-24; it reads MRSIQRRLSVGLFAVLLVVGLVLA. The chain crosses the membrane as a helical span at residues 150–170; the sequence is FARVQWMGLGAGALALLLVLL. Residues 177–228 enclose the HAMP domain; it reads RRSLRPLEEVRLQIAQLQQGQRSQLDNQAPEELEPLVEQINHLLAHTEETLK. A Histidine kinase domain is found at 236 to 438; the sequence is NLGHALKTPL…RVSVELPLQK (203 aa). H239 bears the Phosphohistidine; by autocatalysis mark.

The protein resides in the membrane. It catalyses the reaction ATP + protein L-histidine = ADP + protein N-phospho-L-histidine.. Functionally, member of the two-component regulatory system CarS/CarR that regulates the expression of multiple genes involved in calcium signaling and homeostasis including CarO and CarP. May function as a membrane-associated protein kinase that phosphorylates CarR in response to environmental signals leading to activation of specific gene promoters. In Pseudomonas aeruginosa (strain ATCC 15692 / DSM 22644 / CIP 104116 / JCM 14847 / LMG 12228 / 1C / PRS 101 / PAO1), this protein is Sensor protein kinase CarS (carS).